The sequence spans 446 residues: DDB1- and CUL4-associated factor 12 (446 aa).

Basic residues predominate over residues 1 to 12; sequence MTRRAVSRKRRA. Residues 1–33 are disordered; the sequence is MTRRAVSRKRRAAPGTGPGEQSDWDHSAHKRKR. WD repeat units lie at residues 132 to 173, 177 to 215, 245 to 284, and 333 to 370; these read SHQS…PVCV, GHND…LSKS, PVNC…AKLL, and EQGS…FLED.

The protein belongs to the WD repeat DCAF12 family. As to quaternary structure, component of the DCX(DCAF12) E3 ubiquitin ligase complex, at least composed of cul4 (cul4a or cul4b), ddb1, dcaf12 and rbx1.

Its subcellular location is the cytoplasm. The protein resides in the cytoskeleton. It is found in the microtubule organizing center. The protein localises to the centrosome. It localises to the nucleus. It participates in protein modification; protein ubiquitination. In terms of biological role, substrate-recognition component of a DCX (DDB1-CUL4-X-box) E3 ubiquitin-protein ligase complex of the DesCEND (destruction via C-end degrons) pathway, which recognizes a C-degron located at the extreme C terminus of target proteins, leading to their ubiquitination and degradation. The C-degron recognized by the DesCEND pathway is usually a motif of less than ten residues and can be present in full-length proteins, truncated proteins or proteolytically cleaved forms. The DCX(DCAF12) complex specifically recognizes proteins with a diglutamate (Glu-Glu) at the C-terminus leading to their ubiquitination and degradation. Also directly recognizes the C-terminal glutamate-leucine (Glu-Leu) degron as an alternative degron in proteins leading to their ubiquitination and degradation. This is DDB1- and CUL4-associated factor 12 from Xenopus tropicalis (Western clawed frog).